The following is a 406-amino-acid chain: MERLQKQPLTSPGSVSSSRDSSVPGSPSSIVAKMDNQVLGYKDLAAIPKDKAILDIERPDLMIYEPHFTYSLLEHVELPRSRERSLSPKSTSPPPSPEVWAESRSPGTISQASAPRTAGTPRTSLPHFHHPETTRPDSNIYKKPPIYKQRAESTGGSPQSKHPIEDLIIESSKFPAAQPPDPNQPAKIETDYWPCPPSLAVVETEWRKRKASRRGAEEEEEEEDDDSGEEMKALRERQREELSKVTSNLGKMILKEEMEKSLPIRRKTRSLPDRTPFHTSLHAGTSKSSSLPAYGRTTLSRLQSTDFSPSGSEAESPGLQNGEGQRGRMDRGNSLPCVLEQKIYPYEMLVVTNRGRTKLPPGVDRMRLERHLSAEDFSRVFSMSPEEFGKLALWKRNELKKKASLF.

Disordered stretches follow at residues 1 to 30 (MERL…PSSI) and 78 to 333 (LPRS…DRGN). A compositionally biased stretch (low complexity) spans 11 to 29 (SPGSVSSSRDSSVPGSPSS). Residues serine 16, serine 18, serine 26, serine 92, serine 96, serine 105, serine 110, serine 113, serine 157, and serine 227 each carry the phosphoserine modification. A compositionally biased stretch (polar residues) spans 105-114 (SPGTISQASA). Residues 217–228 (EEEEEEEDDDSG) show a composition bias toward acidic residues. The interval 225–309 (DDSGEEMKAL…SRLQSTDFSP (85 aa)) is interaction with RASGRF2. Composition is skewed to basic and acidic residues over residues 229-243 (EEMK…EELS) and 253-262 (ILKEEMEKSL). Serine 270, serine 280, serine 290, serine 304, serine 316, serine 334, serine 373, and serine 384 each carry phosphoserine. Over residues 282-323 (HAGTSKSSSLPAYGRTTLSRLQSTDFSPSGSEAESPGLQNGE) the composition is skewed to polar residues. An HP domain is found at 338–406 (VLEQKIYPYE…NELKKKASLF (69 aa)). Position 404 is a phosphoserine; by PKA (serine 404).

This sequence belongs to the villin/gelsolin family. In terms of assembly, monomeric; under reducing conditions. Self-associates. Exists under oxidizing condition as a trimer linked by disulfide bonds. Found in a complex with DMTN, F-actin and spectrin. Found in a complex with ADD2, DMTN and SLC2A1. Interacts with F-actin, ITPKB and spectrin. Interacts with SLC2A1 (via C-terminus cytoplasmic region). Interacts with RASGRF2. In terms of processing, phosphorylated. Phosphorylation at Ser-404 by PKA causes the C-terminal headpiece domain to associate with the N-terminal core domain, and leads to the inhibition of its actin bundling activity.

Its subcellular location is the cytoplasm. It localises to the cytosol. The protein localises to the perinuclear region. It is found in the cytoskeleton. The protein resides in the cell membrane. Its subcellular location is the membrane. It localises to the endomembrane system. The protein localises to the cell projection. Functionally, membrane-cytoskeleton-associated protein with F-actin-binding activity that induces F-actin bundles formation and stabilization. Its F-actin-bundling activity is reversibly regulated upon its phosphorylation by the cAMP-dependent protein kinase A (PKA). Binds to the erythrocyte membrane glucose transporter-1 SLC2A1/GLUT1, and hence stabilizes and attaches the spectrin-actin network to the erythrocytic plasma membrane. Plays a role in maintaining the functional integrity of PKA-activated erythrocyte shape and the membrane mechanical properties. Also plays a role as a modulator of actin dynamics in fibroblasts; acts as a negative regulator of the RhoA activation pathway. In platelets, functions as a regulator of internal calcium mobilization across the dense tubular system that affects platelet granule secretion pathways and aggregation. Also required for the formation of a diverse set of cell protrusions, such as filopodia and lamellipodia, necessary for platelet cell spreading, motility and migration. Acts as a tumor suppressor and inhibits malignant cell transformation. This is Dematin (DMTN) from Bos taurus (Bovine).